The following is a 528-amino-acid chain: MSYGTINDMNESVTNYRIKKAQNNIKGWYAYSFSSEPFVVSAVSTYIPLLLQQFASINGVKVHDHSIPCLSETGSDSDKCVLGLFNNRIFVDTSSFALYVFSLSVLFQTIIVISVSGIVDLWGSVKFKGRILVWFGIVGALSTVAISKLNDTQIYSLAGLYIVANGCFGVINVVGNSLLPIFVKDSLKCQSQGAYEPDKVDSLTTVISGRGASLGYSSALIVQIVSMFLVASKKGSKQDVQVAVLFVGIWWFVWQLPMIWLIDDVTIPIRVDDSTLASARSPYPGEQDALGQLNWKNYLSYGWVSLFESFKHARLLKDVMIFLIAWFIISDSITTINSTAVLFSKAELHMSTLNLIMISVLTVVNAMLGAFMIPQFLATKFRWTSSQTLMYIIIWASFIPFYGILGFFFNAFGLKHKFEMFLLAIWYGLSLGGLSAVSRSVFSLIVPPGKESTFFSMFSITDKGSSILGPFLVGLLTDKTHNIRYSFYFFFLLLMLSLPVLNCLDVKRGRREAEELSQVLPESERRLD.

At 1–98 (MSYGTINDMN…IFVDTSSFAL (98 aa)) the chain is on the cytoplasmic side. The helical transmembrane segment at 99 to 119 (YVFSLSVLFQTIIVISVSGIV) threads the bilayer. Topologically, residues 120-130 (DLWGSVKFKGR) are vacuolar. Residues 131–151 (ILVWFGIVGALSTVAISKLND) traverse the membrane as a helical segment. The Cytoplasmic portion of the chain corresponds to 152–153 (TQ). A helical transmembrane segment spans residues 154–174 (IYSLAGLYIVANGCFGVINVV). Residues 175-210 (GNSLLPIFVKDSLKCQSQGAYEPDKVDSLTTVISGR) lie on the Vacuolar side of the membrane. A helical transmembrane segment spans residues 211-231 (GASLGYSSALIVQIVSMFLVA). Over 232–241 (SKKGSKQDVQ) the chain is Cytoplasmic. The chain crosses the membrane as a helical span at residues 242-262 (VAVLFVGIWWFVWQLPMIWLI). Over 263–318 (DDVTIPIRVDDSTLASARSPYPGEQDALGQLNWKNYLSYGWVSLFESFKHARLLKD) the chain is Vacuolar. The residue at position 278 (S278) is a Phosphoserine. Residues 319–339 (VMIFLIAWFIISDSITTINST) form a helical membrane-spanning segment. At 340 to 352 (AVLFSKAELHMST) the chain is on the cytoplasmic side. Residues 353–373 (LNLIMISVLTVVNAMLGAFMI) traverse the membrane as a helical segment. At 374–388 (PQFLATKFRWTSSQT) the chain is on the vacuolar side. A helical membrane pass occupies residues 389–409 (LMYIIIWASFIPFYGILGFFF). Over 410 to 417 (NAFGLKHK) the chain is Cytoplasmic. The chain crosses the membrane as a helical span at residues 418–438 (FEMFLLAIWYGLSLGGLSAVS). The Vacuolar segment spans residues 439-485 (RSVFSLIVPPGKESTFFSMFSITDKGSSILGPFLVGLLTDKTHNIRY). A helical transmembrane segment spans residues 486–506 (SFYFFFLLLMLSLPVLNCLDV). The Cytoplasmic portion of the chain corresponds to 507–528 (KRGRREAEELSQVLPESERRLD).

This sequence belongs to the ATG22 family.

The protein resides in the vacuole membrane. Vacuolar effluxer which mediate the efflux of leucine and other amino acids resulting from autophagic degradation. The release of autophagic amino acids allows the maintenance of protein synthesis and viability during nitrogen starvation. The chain is Autophagy-related protein 22 (ATG22) from Saccharomyces cerevisiae (strain ATCC 204508 / S288c) (Baker's yeast).